Here is a 56-residue protein sequence, read N- to C-terminus: MADSTATCIDIILAIILPPLGVFFKFGCGIEFWICLLLTFFGYLPGIIYAVWVITK.

Transmembrane regions (helical) follow at residues 11 to 31 (IILA…CGIE) and 34 to 54 (ICLL…VWVI).

Belongs to the UPF0057 (PMP3) family. As to expression, expressed in shoot of cold stressed seedlings.

The protein resides in the membrane. Functionally, plays a role in the regulation of membrane potential. Could mediate a proton leak. The polypeptide is Hydrophobic protein LTI6A (LTI6A) (Oryza sativa subsp. japonica (Rice)).